We begin with the raw amino-acid sequence, 510 residues long: 2,3-bisphosphoglycerate-independent phosphoglycerate mutase (510 aa).

Residues Asp-14 and Ser-64 each coordinate Mn(2+). The active-site Phosphoserine intermediate is the Ser-64. Residues His-125, 155 to 156 (RD), Arg-187, Arg-193, 259 to 262 (RADR), and Lys-332 each bind substrate. Mn(2+) contacts are provided by Asp-399, His-403, Asp-440, His-441, and His-459.

It belongs to the BPG-independent phosphoglycerate mutase family. Monomer. It depends on Mn(2+) as a cofactor.

It carries out the reaction (2R)-2-phosphoglycerate = (2R)-3-phosphoglycerate. Its pathway is carbohydrate degradation; glycolysis; pyruvate from D-glyceraldehyde 3-phosphate: step 3/5. Catalyzes the interconversion of 2-phosphoglycerate and 3-phosphoglycerate. The sequence is that of 2,3-bisphosphoglycerate-independent phosphoglycerate mutase from Ectopseudomonas mendocina (strain ymp) (Pseudomonas mendocina).